A 278-amino-acid chain; its full sequence is Envelope glycoprotein L (278 aa).

A signal peptide spans 1–30 (MCRRPDCGFSFSPGPVILLWCCLLLPIVSS). A gL betaherpesvirus-type domain is found at 43-256 (VPAECPELTR…DKYYAGLPPE (214 aa)). Cysteines 154 and 159 form a disulfide.

Belongs to the herpesviridae glycoprotein L (gL) family. Betaherpesvirinae gL subfamily. In terms of assembly, interacts with glycoprotein H (gH); this interaction is necessary for the correct processing and cell surface expression of gH. Forms the envelope pentamer complex (PC) composed of gH, gL, UL128, UL130, and UL131A. The pentamer interacts with host NRP2. Forms the envelope trimer complex composed of gH, gL, and gO. The trimer interacts with host PDGFRA. The trimer also interacts with host EPHA2.

Its subcellular location is the virion membrane. The protein resides in the host cell membrane. It localises to the host Golgi apparatus. The protein localises to the host trans-Golgi network. Its function is as follows. The heterodimer glycoprotein H-glycoprotein L is required for the fusion of viral and plasma membranes leading to virus entry into the host cell. Acts as a functional inhibitor of gH and maintains gH in an inhibited form. Upon binding to host integrins, gL dissociates from gH leading to activation of the viral fusion glycoproteins gB and gH. In human cytomegalovirus, forms two distincts complexes to mediate viral entry, a trimer and a pentamer at the surface of the virion envelope. The gH-gL-gO trimer is required for infection in fibroblasts by interacting with host PDGFRA, and in glioblastoma cells by interacting with host EPHA2. The gH-gL-UL128-UL130-UL131A pentamer is essential for viral entry in epithelial, endothelial and myeloid cells via interaction with host NRP2. This Human cytomegalovirus (strain 5160) (HHV-5) protein is Envelope glycoprotein L.